The chain runs to 745 residues: Aminopeptidase NAALADL1 (745 aa).

Over 1 to 6 (MHWVKI) the chain is Cytoplasmic. A helical; Signal-anchor for type II membrane protein transmembrane segment spans residues 7 to 28 (LGVALGAAALLGLGIILGHFAI). Topologically, residues 29-745 (PKATSPLTSS…AATLVPVADL (717 aa)) are extracellular. N-linked (GlcNAc...) asparagine glycans are attached at residues asparagine 128, asparagine 141, and asparagine 235. Positions 263 and 266 each coordinate Ca(2+). Asparagine 279, asparagine 302, and asparagine 329 each carry an N-linked (GlcNAc...) asparagine glycan. An intrachain disulfide couples cysteine 301 to cysteine 318. Histidine 373 and aspartate 383 together coordinate Zn(2+). Glutamate 421 acts as the Proton donor/acceptor in catalysis. Glutamate 422 contributes to the Zn(2+) binding site. Ca(2+) contacts are provided by glutamate 430 and glutamate 433. Aspartate 450 is a Zn(2+) binding site. N-linked (GlcNAc...) asparagine glycans are attached at residues asparagine 456 and asparagine 497. Histidine 550 lines the Zn(2+) pocket. 2 N-linked (GlcNAc...) asparagine glycosylation sites follow: asparagine 593 and asparagine 620.

Belongs to the peptidase M28 family. M28B subfamily. As to quaternary structure, homodimer. The cofactor is Zn(2+). Post-translationally, N-glycosylated.

It is found in the apical cell membrane. Its function is as follows. Aminopeptidase with broad substrate specificity. Has lower activity with substrates that have Asp or Glu in the P2' position, or Pro in the P3' position. Lacks activity with substrates that have both Pro in the P3' position and Asp or Glu in the P2' position. Lacks carboxypeptidase activity. Lacks dipeptidyl-peptidase IV type activity. This is Aminopeptidase NAALADL1 (Naaladl1) from Mus musculus (Mouse).